The sequence spans 667 residues: UvrABC system protein B (667 aa).

The region spanning Asn28–Arg185 is the Helicase ATP-binding domain. Position 41-48 (Gly41–Thr48) interacts with ATP. Residues Tyr94–Ile117 carry the Beta-hairpin motif. The 163-residue stretch at Gln432–Ile594 folds into the Helicase C-terminal domain. The UVR domain occupies Asn629–Lys664.

The protein belongs to the UvrB family. Forms a heterotetramer with UvrA during the search for lesions. Interacts with UvrC in an incision complex.

The protein localises to the cytoplasm. The UvrABC repair system catalyzes the recognition and processing of DNA lesions. A damage recognition complex composed of 2 UvrA and 2 UvrB subunits scans DNA for abnormalities. Upon binding of the UvrA(2)B(2) complex to a putative damaged site, the DNA wraps around one UvrB monomer. DNA wrap is dependent on ATP binding by UvrB and probably causes local melting of the DNA helix, facilitating insertion of UvrB beta-hairpin between the DNA strands. Then UvrB probes one DNA strand for the presence of a lesion. If a lesion is found the UvrA subunits dissociate and the UvrB-DNA preincision complex is formed. This complex is subsequently bound by UvrC and the second UvrB is released. If no lesion is found, the DNA wraps around the other UvrB subunit that will check the other stand for damage. This is UvrABC system protein B from Aster yellows witches'-broom phytoplasma (strain AYWB).